A 160-amino-acid polypeptide reads, in one-letter code: Cyclic pyranopterin monophosphate synthase (160 aa).

Substrate contacts are provided by residues 77–79 and 114–115; these read LCH and ME. Residue Asp-129 is part of the active site.

The protein belongs to the MoaC family. In terms of assembly, homohexamer; trimer of dimers.

The enzyme catalyses (8S)-3',8-cyclo-7,8-dihydroguanosine 5'-triphosphate = cyclic pyranopterin phosphate + diphosphate. It participates in cofactor biosynthesis; molybdopterin biosynthesis. In terms of biological role, catalyzes the conversion of (8S)-3',8-cyclo-7,8-dihydroguanosine 5'-triphosphate to cyclic pyranopterin monophosphate (cPMP). The sequence is that of Cyclic pyranopterin monophosphate synthase from Alcanivorax borkumensis (strain ATCC 700651 / DSM 11573 / NCIMB 13689 / SK2).